The sequence spans 457 residues: tRNA modification GTPase MnmE (457 aa).

The (6S)-5-formyl-5,6,7,8-tetrahydrofolate site is built by arginine 25, glutamate 87, and arginine 126. The 155-residue stretch at glycine 223 to phenylalanine 377 folds into the TrmE-type G domain. Position 233 (asparagine 233) interacts with K(+). Residues asparagine 233–serine 238, threonine 252–threonine 258, and aspartate 277–glycine 280 each bind GTP. Serine 237 lines the Mg(2+) pocket. 3 residues coordinate K(+): threonine 252, isoleucine 254, and threonine 257. Threonine 258 serves as a coordination point for Mg(2+). Residue lysine 457 coordinates (6S)-5-formyl-5,6,7,8-tetrahydrofolate.

This sequence belongs to the TRAFAC class TrmE-Era-EngA-EngB-Septin-like GTPase superfamily. TrmE GTPase family. Homodimer. Heterotetramer of two MnmE and two MnmG subunits. K(+) is required as a cofactor.

The protein localises to the cytoplasm. Its function is as follows. Exhibits a very high intrinsic GTPase hydrolysis rate. Involved in the addition of a carboxymethylaminomethyl (cmnm) group at the wobble position (U34) of certain tRNAs, forming tRNA-cmnm(5)s(2)U34. This Streptococcus pneumoniae serotype 4 (strain ATCC BAA-334 / TIGR4) protein is tRNA modification GTPase MnmE.